Here is a 471-residue protein sequence, read N- to C-terminus: Arginine biosynthesis bifunctional protein ArgJ, mitochondrial (471 aa).

Residues 1 to 33 constitute a mitochondrion transit peptide; that stretch reads MAMAGCNGFFLHQLRQPRLQLARQLGRTPSRAY. Positions 201, 230, 241, 327, 466, and 471 each coordinate substrate. T241 acts as the Nucleophile in catalysis.

Belongs to the ArgJ family. In terms of assembly, heterodimer of an alpha and a beta chain. Post-translationally, the alpha and beta chains are autoproteolytically processed from a single precursor protein within the mitochondrion.

The protein resides in the mitochondrion matrix. It catalyses the reaction N(2)-acetyl-L-ornithine + L-glutamate = N-acetyl-L-glutamate + L-ornithine. The catalysed reaction is L-glutamate + acetyl-CoA = N-acetyl-L-glutamate + CoA + H(+). It participates in amino-acid biosynthesis; L-arginine biosynthesis; L-ornithine and N-acetyl-L-glutamate from L-glutamate and N(2)-acetyl-L-ornithine (cyclic): step 1/1. It functions in the pathway amino-acid biosynthesis; L-arginine biosynthesis; N(2)-acetyl-L-ornithine from L-glutamate: step 1/4. Its function is as follows. Catalyzes two activities which are involved in the cyclic version of arginine biosynthesis: the synthesis of acetylglutamate from glutamate and acetyl-CoA, and of ornithine by transacetylation between acetylornithine and glutamate. This chain is Arginine biosynthesis bifunctional protein ArgJ, mitochondrial, found in Chaetomium globosum (strain ATCC 6205 / CBS 148.51 / DSM 1962 / NBRC 6347 / NRRL 1970) (Soil fungus).